Reading from the N-terminus, the 511-residue chain is IWS1-like protein (511 aa).

A disordered region spans residues 1 to 200 (MSDHEEESHG…DDGPVDRHGR (200 aa)). 2 stretches are compositionally biased toward low complexity: residues 11–30 (ASPT…PISP) and 55–86 (APAS…SPVK). The span at 94–103 (DSDEDSDAEE) shows a compositional bias: acidic residues. Positions 134 to 143 (HEGTSKKEPT) are enriched in basic and acidic residues. Residues 166 to 179 (LDEFVEGRDEEESQ) are compositionally biased toward acidic residues. The region spanning 294 to 374 (SALSEWLAPL…GEWARPIYHL (81 aa)) is the TFIIS N-terminal domain. A disordered region spans residues 382–454 (SRQEREERDY…RARVPKPSTK (73 aa)). Composition is skewed to basic and acidic residues over residues 383–395 (RQER…SRMP) and 414–425 (DQPKRPRIRDAD).

This sequence belongs to the IWS1 family.

The protein resides in the nucleus. The polypeptide is IWS1-like protein (Caenorhabditis elegans).